Reading from the N-terminus, the 244-residue chain is 5-oxoprolinase subunit A (244 aa).

The protein belongs to the LamB/PxpA family. In terms of assembly, forms a complex composed of PxpA, PxpB and PxpC.

It catalyses the reaction 5-oxo-L-proline + ATP + 2 H2O = L-glutamate + ADP + phosphate + H(+). Functionally, catalyzes the cleavage of 5-oxoproline to form L-glutamate coupled to the hydrolysis of ATP to ADP and inorganic phosphate. The chain is 5-oxoprolinase subunit A from Escherichia coli O17:K52:H18 (strain UMN026 / ExPEC).